Reading from the N-terminus, the 199-residue chain is Holliday junction branch migration complex subunit RuvA (199 aa).

The interval 1-63 is domain I; the sequence is MIASVRGEVL…EDSMTLYGFS (63 aa). The tract at residues 64 to 141 is domain II; the sequence is DTESKDLFSL…DAVATTAGAA (78 aa). The segment at 141–145 is flexible linker; it reads ASGAV. The domain III stretch occupies residues 146 to 199; it reads VGSSIRDQIVEALEGLGFPIKQAEQATDSVLAESPEATTSVALRSALSLLGKTR.

It belongs to the RuvA family. In terms of assembly, homotetramer. Forms an RuvA(8)-RuvB(12)-Holliday junction (HJ) complex. HJ DNA is sandwiched between 2 RuvA tetramers; dsDNA enters through RuvA and exits via RuvB. An RuvB hexamer assembles on each DNA strand where it exits the tetramer. Each RuvB hexamer is contacted by two RuvA subunits (via domain III) on 2 adjacent RuvB subunits; this complex drives branch migration. In the full resolvosome a probable DNA-RuvA(4)-RuvB(12)-RuvC(2) complex forms which resolves the HJ.

It localises to the cytoplasm. Functionally, the RuvA-RuvB-RuvC complex processes Holliday junction (HJ) DNA during genetic recombination and DNA repair, while the RuvA-RuvB complex plays an important role in the rescue of blocked DNA replication forks via replication fork reversal (RFR). RuvA specifically binds to HJ cruciform DNA, conferring on it an open structure. The RuvB hexamer acts as an ATP-dependent pump, pulling dsDNA into and through the RuvAB complex. HJ branch migration allows RuvC to scan DNA until it finds its consensus sequence, where it cleaves and resolves the cruciform DNA. This is Holliday junction branch migration complex subunit RuvA from Rhodococcus erythropolis (strain PR4 / NBRC 100887).